Here is a 941-residue protein sequence, read N- to C-terminus: MVFLPLKWSLATMSFLLSSLLALLTVSTPSWCQSTEASPKRSDGTPFPWNKIRLPEYVIPVHYDLLIHANLTTLTFWGTTKVEITASQPTSTIILHSHHLQISRATLRKGAGERLSEEPLQVLEHPRQEQIALLAPEPLLVGLPYTVVIHYAGNLSETFHGFYKSTYRTKEGELRILASTQFEPTAARMAFPCFDEPAFKASFSIKIRREPRHLAISNMPLVKSVTVAEGLIEDHFDVTVKMSTYLVAFIISDFESVSKITKSGVKVSVYAVPDKINQADYALDAAVTLLEFYEDYFSIPYPLPKQDLAAIPDFQSGAMENWGLTTYRESALLFDAEKSSASSKLGITMTVAHELAHQWFGNLVTMEWWNDLWLNEGFAKFMEFVSVSVTHPELKVGDYFFGKCFDAMEVDALNSSHPVSTPVENPAQIREMFDDVSYDKGACILNMLREYLSADAFKSGIVQYLQKHSYKNTKNEDLWDSMASICPTDGVKGMDGFCSRSQHSSSSSHWHQEGVDVKTMMNTWTLQKGFPLITITVRGRNVHMKQEHYMKGSDGAPDTGYLWHVPLTFITSKSDMVHRFLLKTKTDVLILPEEVEWIKFNVGMNGYYIVHYEDDGWDSLTGLLKGTHTAVSSNDRASLINNAFQLVSIGKLSIEKALDLSLYLKHETEIMPVFQGLNELIPMYKLMEKRDMNEVETQFKAFLIRLLRDLIDKQTWTDEGSVSERMLRSQLLLLACVHNYQPCVQRAEGYFRKWKESNGNLSLPVDVTLAVFAVGAQSTEGWDFLYSKYQFSLSSTEKSQIEFALCRTQNKEKLQWLLDESFKGDKIKTQEFPQILTLIGRNPVGYPLAWQFLRKNWNKLVQKFELGSSSIAHMVMGTTNQFSTRTRLEEVKGFFSSLKENGSQLRCVQQTIETIEENIGWMDKNFDKIRVWLQSEKLERM.

Met-1 is a topological domain (cytoplasmic). A helical; Signal-anchor for type II membrane protein membrane pass occupies residues Val-2 to Leu-21. The Lumenal segment spans residues Ala-22–Met-941. 2 N-linked (GlcNAc...) asparagine glycosylation sites follow: Asn-70 and Asn-154. Residues Glu-183 and Gly-317 to Asn-321 contribute to the substrate site. His-353 provides a ligand contact to Zn(2+). Glu-354 serves as the catalytic Proton acceptor. 2 residues coordinate Zn(2+): His-357 and Glu-376. Intrachain disulfides connect Cys-404–Cys-443 and Cys-736–Cys-743. The N-linked (GlcNAc...) asparagine glycan is linked to Asn-414. N-linked (GlcNAc...) asparagine glycans are attached at residues Asn-760 and Asn-901.

Belongs to the peptidase M1 family. In terms of assembly, monomer. May also exist as a heterodimer; with ERAP2. Interacts with RBMX. Zn(2+) serves as cofactor. In terms of processing, N-glycosylated. In terms of tissue distribution, ubiquitous.

Its subcellular location is the endoplasmic reticulum membrane. Aminopeptidase that plays a central role in peptide trimming, a step required for the generation of most HLA class I-binding peptides. Peptide trimming is essential to customize longer precursor peptides to fit them to the correct length required for presentation on MHC class I molecules. Strongly prefers substrates 9-16 residues long. Rapidly degrades 13-mer to a 9-mer and then stops. Preferentially hydrolyzes the residue Leu and peptides with a hydrophobic C-terminus, while it has weak activity toward peptides with charged C-terminus. May play a role in the inactivation of peptide hormones. May be involved in the regulation of blood pressure through the inactivation of angiotensin II and/or the generation of bradykinin in the kidney. The protein is Endoplasmic reticulum aminopeptidase 1 (ERAP1) of Homo sapiens (Human).